A 148-amino-acid chain; its full sequence is Large ribosomal subunit protein bL9 (148 aa).

This sequence belongs to the bacterial ribosomal protein bL9 family.

Its function is as follows. Binds to the 23S rRNA. This Pseudomonas putida (strain W619) protein is Large ribosomal subunit protein bL9.